The chain runs to 150 residues: Truncated transcription factor CAULIFLOWER A (150 aa).

Residues 1-61 enclose the MADS-box domain; sequence MGRGRVEMKR…GKLFEYSSES (61 aa). A K-box; partial domain is found at 90–150; it reads QTNWSMEYSR…IRSRKNQLMH (61 aa).

Homodimer capable of binding to CArG-box sequences. Expressed in some of the meristems of arrest-stage cauliflower heads.

It localises to the nucleus. In terms of biological role, probable transcription factor that promotes early floral meristem identity in synergy with APETALA1, FRUITFULL and LEAFY. Is required subsequently for the transition of an inflorescence meristem into a floral meristem. Seems to be partially redundant to the function of APETALA1. The chain is Truncated transcription factor CAULIFLOWER A (CAL-A) from Brassica oleracea var. botrytis (Cauliflower).